Consider the following 2355-residue polypeptide: Acetyl-CoA carboxylase 2 (2355 aa).

Positions 138 to 645 (PIHSILVATN…HTGWLDSRIA (508 aa)) constitute a Biotin carboxylation domain. Residues 291–485 (GRSLVTVPEE…AAQVAVGMGI (195 aa)) form the ATP-grasp domain. 317–374 (CQVVGYPAMIKASWGGGGKGIRKVHNDDEVRALFKQVQGEVPGSPIFIMKVASQSRHL) contributes to the ATP binding site. Residues Glu-440, Glu-454, and Asn-456 each coordinate Mg(2+). Mn(2+)-binding residues include Glu-440, Glu-454, and Asn-456. Residue Arg-458 is part of the active site. The 75-residue stretch at 772–846 (LQNDHDPSKL…QAGELIAKLD (75 aa)) folds into the Biotinyl-binding domain. Residue Lys-813 is modified to N6-biotinyllysine. Residue Thr-1133 is modified to Phosphothreonine. A Phosphoserine modification is found at Ser-1293. Residues 1593 to 1932 (QYKPLNNLDR…YVGGPLPVLA (340 aa)) form the CoA carboxyltransferase N-terminal domain. Positions 1593–2251 (QYKPLNNLDR…ESSLVRNIRK (659 aa)) are carboxyltransferase. The CoA site is built by Arg-1841, Lys-2142, and Arg-2144. One can recognise a CoA carboxyltransferase C-terminal domain in the interval 1936–2251 (PPERTVEYIP…ESSLVRNIRK (316 aa)).

Homodimer. The cofactor is biotin. It depends on Mg(2+) as a cofactor. Mn(2+) is required as a cofactor. As to expression, widely expressed at low levels.

It localises to the cytoplasm. Its subcellular location is the cytosol. It catalyses the reaction hydrogencarbonate + acetyl-CoA + ATP = malonyl-CoA + ADP + phosphate + H(+). It carries out the reaction N(6)-biotinyl-L-lysyl-[protein] + hydrogencarbonate + ATP = N(6)-carboxybiotinyl-L-lysyl-[protein] + ADP + phosphate + H(+). Its pathway is lipid metabolism; malonyl-CoA biosynthesis; malonyl-CoA from acetyl-CoA: step 1/1. Functionally, multifunctional enzyme that catalyzes the carboxylation of acetyl-CoA, forming malonyl-CoA, which is used in the plastid for fatty acid synthesis and in the cytosol in various biosynthetic pathways including fatty acid elongation. The sequence is that of Acetyl-CoA carboxylase 2 (ACC2) from Arabidopsis thaliana (Mouse-ear cress).